We begin with the raw amino-acid sequence, 454 residues long: Bifunctional protein GlmU (454 aa).

The segment at 1-226 is pyrophosphorylase; that stretch reads MSTTVIILAA…AFEVEGVNDR (226 aa). UDP-N-acetyl-alpha-D-glucosamine is bound by residues 8 to 11, Lys-22, Gln-73, 78 to 79, 100 to 102, Gly-137, Glu-151, Asn-166, and Asn-224; these read LAAG, GT, and YGD. Asp-102 provides a ligand contact to Mg(2+). Mg(2+) is bound at residue Asn-224. The tract at residues 227-247 is linker; it reads LQLAALEREFQKQQAKELMQQ. The segment at 248 to 454 is N-acetyltransferase; it reads GVTFADPARF…NYQRPQKLKK (207 aa). Positions 330 and 348 each coordinate UDP-N-acetyl-alpha-D-glucosamine. His-360 functions as the Proton acceptor in the catalytic mechanism. 2 residues coordinate UDP-N-acetyl-alpha-D-glucosamine: Tyr-363 and Asn-374. Residues Ala-377, 383–384, Ser-402, Ala-420, and Arg-437 each bind acetyl-CoA; that span reads NY.

This sequence in the N-terminal section; belongs to the N-acetylglucosamine-1-phosphate uridyltransferase family. It in the C-terminal section; belongs to the transferase hexapeptide repeat family. In terms of assembly, homotrimer. Requires Mg(2+) as cofactor.

Its subcellular location is the cytoplasm. It carries out the reaction alpha-D-glucosamine 1-phosphate + acetyl-CoA = N-acetyl-alpha-D-glucosamine 1-phosphate + CoA + H(+). The catalysed reaction is N-acetyl-alpha-D-glucosamine 1-phosphate + UTP + H(+) = UDP-N-acetyl-alpha-D-glucosamine + diphosphate. It participates in nucleotide-sugar biosynthesis; UDP-N-acetyl-alpha-D-glucosamine biosynthesis; N-acetyl-alpha-D-glucosamine 1-phosphate from alpha-D-glucosamine 6-phosphate (route II): step 2/2. Its pathway is nucleotide-sugar biosynthesis; UDP-N-acetyl-alpha-D-glucosamine biosynthesis; UDP-N-acetyl-alpha-D-glucosamine from N-acetyl-alpha-D-glucosamine 1-phosphate: step 1/1. It functions in the pathway bacterial outer membrane biogenesis; LPS lipid A biosynthesis. Functionally, catalyzes the last two sequential reactions in the de novo biosynthetic pathway for UDP-N-acetylglucosamine (UDP-GlcNAc). The C-terminal domain catalyzes the transfer of acetyl group from acetyl coenzyme A to glucosamine-1-phosphate (GlcN-1-P) to produce N-acetylglucosamine-1-phosphate (GlcNAc-1-P), which is converted into UDP-GlcNAc by the transfer of uridine 5-monophosphate (from uridine 5-triphosphate), a reaction catalyzed by the N-terminal domain. The protein is Bifunctional protein GlmU of Acinetobacter baumannii (strain ACICU).